We begin with the raw amino-acid sequence, 547 residues long: uncharacterized protein (547 aa).

Over residues 1-18 (MEYHPSSQSPQVNPGMES) the composition is skewed to polar residues. 2 disordered regions span residues 1–41 (MEYH…LQHP) and 80–165 (PSYP…VKRQ). 2 stretches are compositionally biased toward low complexity: residues 19-29 (QQGGYTYTYQQ) and 83-94 (PQSSSAPSNNSY). Residues 121 to 135 (VPSPSPIEMVPPSPP) are compositionally biased toward pro residues. Residues 136–160 (KTGSNNSAPVTGKTVQSGNALNNSG) are compositionally biased toward polar residues. A DNA-binding region (zn(2)-C6 fungal-type) is located at residues 174–201 (CLTCRKRRIKCDERKPICYNCIKSKRQC).

It localises to the nucleus. This is an uncharacterized protein from Schizosaccharomyces pombe (strain 972 / ATCC 24843) (Fission yeast).